Here is a 610-residue protein sequence, read N- to C-terminus: Aspartate--tRNA(Asp/Asn) ligase (610 aa).

An L-aspartate-binding site is contributed by E182. An aspartate region spans residues 206–209; that stretch reads QLFK. R228 serves as a coordination point for L-aspartate. Residues 228–230 and Q237 each bind ATP; that span reads RDE. Residue H470 coordinates L-aspartate. E506 lines the ATP pocket. R513 provides a ligand contact to L-aspartate. 558-561 is a binding site for ATP; that stretch reads GLDR.

The protein belongs to the class-II aminoacyl-tRNA synthetase family. Type 1 subfamily. Homodimer.

The protein localises to the cytoplasm. The enzyme catalyses tRNA(Asx) + L-aspartate + ATP = L-aspartyl-tRNA(Asx) + AMP + diphosphate. In terms of biological role, aspartyl-tRNA synthetase with relaxed tRNA specificity since it is able to aspartylate not only its cognate tRNA(Asp) but also tRNA(Asn). Reaction proceeds in two steps: L-aspartate is first activated by ATP to form Asp-AMP and then transferred to the acceptor end of tRNA(Asp/Asn). The sequence is that of Aspartate--tRNA(Asp/Asn) ligase from Acidobacterium capsulatum (strain ATCC 51196 / DSM 11244 / BCRC 80197 / JCM 7670 / NBRC 15755 / NCIMB 13165 / 161).